The following is a 104-amino-acid chain: Large ribosomal subunit protein uL24 (104 aa).

The protein belongs to the universal ribosomal protein uL24 family. In terms of assembly, part of the 50S ribosomal subunit.

Its function is as follows. One of two assembly initiator proteins, it binds directly to the 5'-end of the 23S rRNA, where it nucleates assembly of the 50S subunit. One of the proteins that surrounds the polypeptide exit tunnel on the outside of the subunit. The chain is Large ribosomal subunit protein uL24 from Psychromonas ingrahamii (strain DSM 17664 / CCUG 51855 / 37).